Here is a 246-residue protein sequence, read N- to C-terminus: 2',3'-cyclic-nucleotide 3'-phosphodiesterase (246 aa).

The active-site Proton donor/acceptor is the H40. A substrate-binding site is contributed by T42. Residues 133–146 (QNPQLYTKDNNGNT) are compositionally biased toward polar residues. Residues 133 to 159 (QNPQLYTKDNNGNTIRRKPSKKKSKTT) form a disordered region. A compositionally biased stretch (basic residues) spans 147–156 (IRRKPSKKKS). H188 (proton donor/acceptor) is an active-site residue. Substrate contacts are provided by S190 and Y193.

The protein belongs to the 2H phosphoesterase superfamily. CPD1 family.

It is found in the golgi apparatus. It carries out the reaction a nucleoside 2',3'-cyclic phosphate + H2O = a nucleoside 2'-phosphate + H(+). Functionally, involved in the metabolism of ADP-ribose 1',2'-cyclic phosphate which is produced as a consequence of tRNA splicing. This is 2',3'-cyclic-nucleotide 3'-phosphodiesterase (CPD1) from Candida albicans (strain SC5314 / ATCC MYA-2876) (Yeast).